The primary structure comprises 157 residues: 2-C-methyl-D-erythritol 2,4-cyclodiphosphate synthase (157 aa).

Residues aspartate 8 and histidine 10 each contribute to the a divalent metal cation site. Residues 8–10 and 34–35 contribute to the 4-CDP-2-C-methyl-D-erythritol 2-phosphate site; these read DVH and HS. Histidine 42 contacts a divalent metal cation. 4-CDP-2-C-methyl-D-erythritol 2-phosphate is bound by residues 56-58, 132-135, phenylalanine 139, and arginine 142; these read DIG and TTNE.

This sequence belongs to the IspF family. In terms of assembly, homotrimer. It depends on a divalent metal cation as a cofactor.

The enzyme catalyses 4-CDP-2-C-methyl-D-erythritol 2-phosphate = 2-C-methyl-D-erythritol 2,4-cyclic diphosphate + CMP. It functions in the pathway isoprenoid biosynthesis; isopentenyl diphosphate biosynthesis via DXP pathway; isopentenyl diphosphate from 1-deoxy-D-xylulose 5-phosphate: step 4/6. In terms of biological role, involved in the biosynthesis of isopentenyl diphosphate (IPP) and dimethylallyl diphosphate (DMAPP), two major building blocks of isoprenoid compounds. Catalyzes the conversion of 4-diphosphocytidyl-2-C-methyl-D-erythritol 2-phosphate (CDP-ME2P) to 2-C-methyl-D-erythritol 2,4-cyclodiphosphate (ME-CPP) with a corresponding release of cytidine 5-monophosphate (CMP). The chain is 2-C-methyl-D-erythritol 2,4-cyclodiphosphate synthase from Symbiobacterium thermophilum (strain DSM 24528 / JCM 14929 / IAM 14863 / T).